Here is a 102-residue protein sequence, read N- to C-terminus: Putative pterin-4-alpha-carbinolamine dehydratase (102 aa).

This sequence belongs to the pterin-4-alpha-carbinolamine dehydratase family.

The catalysed reaction is (4aS,6R)-4a-hydroxy-L-erythro-5,6,7,8-tetrahydrobiopterin = (6R)-L-erythro-6,7-dihydrobiopterin + H2O. This chain is Putative pterin-4-alpha-carbinolamine dehydratase, found in Burkholderia cenocepacia (strain HI2424).